Reading from the N-terminus, the 311-residue chain is MALPILLDCDPGHDDAIAIVLALASPELDVKAITSSAGNQTPEKTLRNVLRMLTLLNRTDIPVAGGAVKPLMRELIIADNVHGESGLDGPALPEPTFAPQNCTAVELMAKTLRESAEPVTIVSTGPQTNVALLLNSHPELHSKIARIVIMGGAMGLGNWTPAAEFNIYVDPEAAEIVFQSGIPVVMAGLDVTHKAQIHVEDTERFRAIGNPVSTIVAELLDFFLEYHKDEKWGFVGAPLHDPCTIAWLLKPELFTTVERWVGVETQGKYTQGMTVVDYYYLTGNKPNATVMVDVDRQGFVDLLADRLKFYA.

Residue His240 is part of the active site.

It belongs to the IUNH family. RihA subfamily.

Its function is as follows. Hydrolyzes with equal efficiency cytidine or uridine to ribose and cytosine or uracil, respectively. This Escherichia coli O157:H7 protein is Pyrimidine-specific ribonucleoside hydrolase RihA.